The following is a 268-amino-acid chain: tRNA (guanine-N(1)-)-methyltransferase (268 aa).

S-adenosyl-L-methionine-binding positions include glycine 110 and 129-134; that span reads IGDFVM. Residues 246-268 are disordered; it reads WGAPPAPVKRHRKRRPETTESAS.

Belongs to the RNA methyltransferase TrmD family. Homodimer.

It localises to the cytoplasm. It carries out the reaction guanosine(37) in tRNA + S-adenosyl-L-methionine = N(1)-methylguanosine(37) in tRNA + S-adenosyl-L-homocysteine + H(+). Specifically methylates guanosine-37 in various tRNAs. This is tRNA (guanine-N(1)-)-methyltransferase from Deinococcus deserti (strain DSM 17065 / CIP 109153 / LMG 22923 / VCD115).